A 379-amino-acid chain; its full sequence is Cytochrome b (379 aa).

Helical transmembrane passes span 33-53, 77-98, 113-133, and 178-198; these read FGSL…FLAM, WTIR…FIHV, WNVG…GYVL, and FFAL…IHLL. Positions 83 and 97 each coordinate heme b. The heme b site is built by H182 and H196. Position 201 (H201) interacts with a ubiquinone. 4 consecutive transmembrane segments (helical) span residues 226 to 246, 288 to 308, 320 to 340, and 347 to 367; these read TKDF…ALFY, LGGV…PFLQ, LSQF…WIGG, and FINI…FIMP.

It belongs to the cytochrome b family. As to quaternary structure, the cytochrome bc1 complex contains 11 subunits: 3 respiratory subunits (MT-CYB, CYC1 and UQCRFS1), 2 core proteins (UQCRC1 and UQCRC2) and 6 low-molecular weight proteins (UQCRH/QCR6, UQCRB/QCR7, UQCRQ/QCR8, UQCR10/QCR9, UQCR11/QCR10 and a cleavage product of UQCRFS1). This cytochrome bc1 complex then forms a dimer. It depends on heme b as a cofactor.

It localises to the mitochondrion inner membrane. In terms of biological role, component of the ubiquinol-cytochrome c reductase complex (complex III or cytochrome b-c1 complex) that is part of the mitochondrial respiratory chain. The b-c1 complex mediates electron transfer from ubiquinol to cytochrome c. Contributes to the generation of a proton gradient across the mitochondrial membrane that is then used for ATP synthesis. The polypeptide is Cytochrome b (MT-CYB) (Lepilemur dorsalis (Grey-backed sportive lemur)).